Consider the following 219-residue polypeptide: Orotate phosphoribosyltransferase (219 aa).

A 5-phospho-alpha-D-ribose 1-diphosphate-binding site is contributed by Lys-26. Position 34–35 (34–35 (FF)) interacts with orotate. 5-phospho-alpha-D-ribose 1-diphosphate contacts are provided by residues 72-73 (YK), Arg-98, Lys-99, Lys-102, His-104, and 124-132 (DDVITAGTA). Orotate contacts are provided by Thr-128 and Arg-156.

The protein belongs to the purine/pyrimidine phosphoribosyltransferase family. PyrE subfamily. Homodimer. Mg(2+) serves as cofactor.

It catalyses the reaction orotidine 5'-phosphate + diphosphate = orotate + 5-phospho-alpha-D-ribose 1-diphosphate. Its pathway is pyrimidine metabolism; UMP biosynthesis via de novo pathway; UMP from orotate: step 1/2. Catalyzes the transfer of a ribosyl phosphate group from 5-phosphoribose 1-diphosphate to orotate, leading to the formation of orotidine monophosphate (OMP). This Xylella fastidiosa (strain M23) protein is Orotate phosphoribosyltransferase.